Here is a 250-residue protein sequence, read N- to C-terminus: Entry-fusion complex associated protein OPG095 (250 aa).

A lipid anchor (N-myristoyl glycine; by host) is attached at Gly-2. Residues Gly-2–Asn-12 form a targeting to MV membrane region. At Gly-2–Gly-183 the chain is on the virion surface side. Intrachain disulfides connect Cys-34–Cys-57, Cys-49–Cys-136, and Cys-116–Cys-158. A helical transmembrane segment spans residues Val-184–Ala-204. Over Lys-205–Asn-250 the chain is Intravirion.

The protein belongs to the orthopoxvirus OPG095 family. In terms of assembly, component of the entry fusion complex (EFC) composed of OPG053, OPG076, OPG086, OPG094, OPG095, OPG099, OPG107, OPG143, OPG104, OPG147 and OPG155. Except for OPG095 and OPG053, each of the EFC proteins is required for assembly or stability of the complex. In terms of processing, myristoylated. Post-translationally, disulfid bonds are oxidized in the cytoplasm by OPG088 protein. Unglycosylated because produced in viral factories instead of the classic ER -Golgi route.

The protein localises to the virion membrane. In terms of biological role, component of the entry fusion complex (EFC), which consists of 11 proteins. During cell infection, this complex mediates entry of the virion core into the host cytoplasm by a two-step mechanism consisting of lipid mixing of the viral and cellular membranes and subsequent pore formation. This Homo sapiens (Human) protein is Entry-fusion complex associated protein OPG095 (OPG099).